We begin with the raw amino-acid sequence, 54 residues long: Ovomucoid (54 aa).

Residues 4 to 54 (VDCSDYPKPVCSPENMPVCGSDSKTYSNKCDFCNAVADSNGTLTLSHFGKC) enclose the Kazal-like domain. Disulfide bonds link cysteine 6–cysteine 36, cysteine 14–cysteine 33, and cysteine 22–cysteine 54. A glycan (N-linked (GlcNAc...) asparagine) is linked at asparagine 43.

Its subcellular location is the secreted. This Nycticorax nycticorax (Black-crowned night-heron) protein is Ovomucoid.